Here is a 272-residue protein sequence, read N- to C-terminus: WIMGHMVNDLSLVDEFLNDGANSLELDVEFSSSGTAQRTHHGFPCDCFRYCTNSEKFSTYLDYIRQLTTPGNSKFQSRLILLVMDLKLNPLSSSAAYNAGADVALNLLNHYWQRGESEARAYIVLSLSTIGGAEFISGFKSTMEKEGFADKYYDKIGWDFSGNEDLQQIRDVLENYGIREHIWQGDGITNCLPRGDSRLKEALNLRYSPSYIYADKVYTWSIDEENSIKHALWLGVDGVMTNHPERVIEVLGKSKYSDKLRLATYDDNPWEK.

The active site involves His5. Mg(2+) contacts are provided by Glu25 and Asp27. His41 (nucleophile) is an active-site residue. Cystine bridges form between Cys45/Cys51 and Cys47/Cys191. Asp85 is a Mg(2+) binding site.

The protein belongs to the arthropod phospholipase D family. Class II subfamily. Mg(2+) is required as a cofactor. Expressed by the venom gland.

It localises to the secreted. The enzyme catalyses an N-(acyl)-sphingosylphosphocholine = an N-(acyl)-sphingosyl-1,3-cyclic phosphate + choline. It catalyses the reaction an N-(acyl)-sphingosylphosphoethanolamine = an N-(acyl)-sphingosyl-1,3-cyclic phosphate + ethanolamine. It carries out the reaction a 1-acyl-sn-glycero-3-phosphocholine = a 1-acyl-sn-glycero-2,3-cyclic phosphate + choline. The catalysed reaction is a 1-acyl-sn-glycero-3-phosphoethanolamine = a 1-acyl-sn-glycero-2,3-cyclic phosphate + ethanolamine. Functionally, dermonecrotic toxins cleave the phosphodiester linkage between the phosphate and headgroup of certain phospholipids (sphingolipid and lysolipid substrates), forming an alcohol (often choline) and a cyclic phosphate. This toxin acts on sphingomyelin (SM). It may also act on ceramide phosphoethanolamine (CPE), lysophosphatidylcholine (LPC) and lysophosphatidylethanolamine (LPE), but not on lysophosphatidylserine (LPS), and lysophosphatidylglycerol (LPG). It acts by transphosphatidylation, releasing exclusively cyclic phosphate products as second products. Induces dermonecrosis, hemolysis, increased vascular permeability, edema, inflammatory response, and platelet aggregation. The protein is Dermonecrotic toxin SpeSicTox-betaIB1b of Sicarius peruensis (Six-eyed sand spider).